The primary structure comprises 579 residues: Membrane protein insertase YidC (579 aa).

A helical transmembrane segment spans residues 10–30 (LVIVTILSALILFGWSFVTKH). Positions 35–61 (PPAPTQQGKNQPKAELTAEESGDKPLK) are disordered. 5 consecutive transmembrane segments (helical) span residues 330-350 (FDKA…FYYL), 351-371 (DWLF…VFTI), 423-443 (VNPF…IALY), 478-498 (LLHF…ILGI), and 523-543 (PLIS…YYIF). Residues 560–572 (STPEERQDRAERK) are compositionally biased toward basic and acidic residues. The disordered stretch occupies residues 560-579 (STPEERQDRAERKRPSKKKA).

Belongs to the OXA1/ALB3/YidC family. Type 1 subfamily. As to quaternary structure, interacts with the Sec translocase complex via SecD. Specifically interacts with transmembrane segments of nascent integral membrane proteins during membrane integration.

It localises to the cell inner membrane. In terms of biological role, required for the insertion and/or proper folding and/or complex formation of integral membrane proteins into the membrane. Involved in integration of membrane proteins that insert both dependently and independently of the Sec translocase complex, as well as at least some lipoproteins. Aids folding of multispanning membrane proteins. This is Membrane protein insertase YidC from Zymomonas mobilis subsp. mobilis (strain ATCC 31821 / ZM4 / CP4).